A 107-amino-acid polypeptide reads, in one-letter code: SFAGLKDADVAAALAACSAADSFKHKEFFAKVGLASKSLDDVKKAFYVIDQDKSGFIEEDELKLFLQNFSPSARALTDAETKAFLADGDKDGDGMIGVDEFAAMIKA.

N-acetylserine is present on serine 1. EF-hand domains lie at 37–72 and 76–107; these read KSLDDVKKAFYVIDQDKSGFIEEDELKLFLQNFSPS and LTDAETKAFLADGDKDGDGMIGVDEFAAMIKA. The Ca(2+) site is built by aspartate 50, aspartate 52, serine 54, phenylalanine 56, glutamate 58, glutamate 61, aspartate 89, aspartate 91, aspartate 93, methionine 95, and glutamate 100.

This sequence belongs to the parvalbumin family.

Its function is as follows. In muscle, parvalbumin is thought to be involved in relaxation after contraction. It binds two calcium ions. This Esox lucius (Northern pike) protein is Parvalbumin beta.